The sequence spans 462 residues: Fasciclin-like arabinogalactan protein 18 (462 aa).

Residues 1–25 (MDRCIYGCSVITIFFSFFFLLNASA) form the signal peptide. N-linked (GlcNAc...) asparagine glycans are attached at residues N32, N77, and N293. FAS1 domains are found at residues 40–185 (NSNS…ERLL) and 271–414 (VKDF…DGVL).

This sequence belongs to the fasciclin-like AGP family.

The protein resides in the secreted. Functionally, may be a cell surface adhesion protein. The sequence is that of Fasciclin-like arabinogalactan protein 18 (FLA18) from Arabidopsis thaliana (Mouse-ear cress).